An 85-amino-acid polypeptide reads, in one-letter code: U1-theraphotoxin-Hs1a (85 aa).

Positions 1 to 22 are cleaved as a signal peptide; it reads MKVTLIAILTCAAVLVLHTTAA. Positions 23 to 48 are excised as a propeptide; sequence EELEAESQLMEVGMPDTELAAVDEER. Cystine bridges form between cysteine 52-cysteine 66, cysteine 56-cysteine 77, and cysteine 71-cysteine 82.

In terms of assembly, heterodimer composed of the two variants Ile-58 and Gln-58. Expressed by the venom gland.

Its subcellular location is the secreted. Its function is as follows. Lethal neurotoxin that blocks neuromuscular transmission. Acts cooperatively to potentiate the activity of huwentoxin-I. This toxin is active against insects. This is U1-theraphotoxin-Hs1a from Cyriopagopus schmidti (Chinese bird spider).